A 322-amino-acid chain; its full sequence is Probable ATP-dependent 6-phosphofructokinase (322 aa).

ATP-binding positions include Gly-11, 72-73, and 102-105; these read RF and GDGS. Asp-103 lines the Mg(2+) pocket. Residues 125-127, 169-171, Glu-222, Lys-249, and 255-258 contribute to the substrate site; these read TID, MGR, and YLQR. The Proton acceptor role is filled by Asp-127.

The protein belongs to the phosphofructokinase type A (PFKA) family. As to quaternary structure, homotetramer. Mg(2+) serves as cofactor.

It is found in the cytoplasm. The enzyme catalyses beta-D-fructose 6-phosphate + ATP = beta-D-fructose 1,6-bisphosphate + ADP + H(+). It functions in the pathway carbohydrate degradation; glycolysis; D-glyceraldehyde 3-phosphate and glycerone phosphate from D-glucose: step 3/4. In terms of biological role, catalyzes the phosphorylation of D-fructose 6-phosphate to fructose 1,6-bisphosphate by ATP, the first committing step of glycolysis. This Malacoplasma penetrans (strain HF-2) (Mycoplasma penetrans) protein is Probable ATP-dependent 6-phosphofructokinase (pfkA).